The primary structure comprises 363 residues: Protein Wnt-5b (363 aa).

The N-terminal stretch at M1–S21 is a signal peptide. C87 and C98 are disulfide-bonded. N-linked (GlcNAc...) asparagine glycosylation is found at N97 and N103. Intrachain disulfides connect C137–C145, C147–C165, C221–C235, C223–C230, C292–C323, C308–C318, C322–C362, C338–C353, C340–C350, and C345–C346. S227 carries O-palmitoleoyl serine; by PORCN lipidation. N-linked (GlcNAc...) asparagine glycans are attached at residues N295 and N309.

It belongs to the Wnt family. In terms of processing, palmitoleoylation is required for efficient binding to frizzled receptors. Depalmitoleoylation leads to Wnt signaling pathway inhibition.

The protein resides in the secreted. It is found in the extracellular space. The protein localises to the extracellular matrix. Functionally, ligand for members of the frizzled family of seven transmembrane receptors. Can activate or inhibit canonical Wnt signaling, depending on receptor context. Required during embryogenesis for extension of the primary anterior-posterior axis. Regulates convergent extension movements and hypaxial myogenesis during gastrulation via activation of non-canonical Wnt signaling. This Danio rerio (Zebrafish) protein is Protein Wnt-5b (wnt5b).